The following is a 240-amino-acid chain: PF03932 family protein CutC (240 aa).

Belongs to the CutC family.

Its subcellular location is the cytoplasm. The protein is PF03932 family protein CutC of Xanthomonas axonopodis pv. citri (strain 306).